The chain runs to 589 residues: Malto-oligosyltrehalose trehalohydrolase (589 aa).

256–261 (GFDAVH) serves as a coordination point for substrate. Asp258 (nucleophile) is an active-site residue. Glu295 (proton donor) is an active-site residue. Substrate is bound by residues 320-324 (DDFHT) and 390-395 (HDQIGN).

The protein belongs to the glycosyl hydrolase 13 family.

The protein resides in the cytoplasm. It catalyses the reaction hydrolysis of (1-&gt;4)-alpha-D-glucosidic linkage in 4-alpha-D-[(1-&gt;4)-alpha-D-glucanosyl]n trehalose to yield trehalose and (1-&gt;4)-alpha-D-glucan.. The protein operates within glycan biosynthesis; trehalose biosynthesis. The chain is Malto-oligosyltrehalose trehalohydrolase (treZ) from Brevibacterium helvolum.